Consider the following 466-residue polypeptide: Ribulose bisphosphate carboxylase large chain (466 aa).

Lysine 5 carries the post-translational modification N6,N6,N6-trimethyllysine. Residues asparagine 114 and threonine 164 each coordinate substrate. The active-site Proton acceptor is lysine 166. Lysine 168 contacts substrate. Residues lysine 192, aspartate 194, and glutamate 195 each contribute to the Mg(2+) site. Lysine 192 carries the N6-carboxylysine modification. Histidine 285 (proton acceptor) is an active-site residue. Residues arginine 286, histidine 318, and serine 370 each coordinate substrate.

It belongs to the RuBisCO large chain family. Type I subfamily. As to quaternary structure, heterohexadecamer of 8 large chains and 8 small chains; disulfide-linked. The disulfide link is formed within the large subunit homodimers. Mg(2+) serves as cofactor. The disulfide bond which can form in the large chain dimeric partners within the hexadecamer appears to be associated with oxidative stress and protein turnover.

The protein localises to the plastid. It is found in the chloroplast. The enzyme catalyses 2 (2R)-3-phosphoglycerate + 2 H(+) = D-ribulose 1,5-bisphosphate + CO2 + H2O. The catalysed reaction is D-ribulose 1,5-bisphosphate + O2 = 2-phosphoglycolate + (2R)-3-phosphoglycerate + 2 H(+). In terms of biological role, ruBisCO catalyzes two reactions: the carboxylation of D-ribulose 1,5-bisphosphate, the primary event in carbon dioxide fixation, as well as the oxidative fragmentation of the pentose substrate in the photorespiration process. Both reactions occur simultaneously and in competition at the same active site. The protein is Ribulose bisphosphate carboxylase large chain of Drosophyllum lusitanicum (Portuguese sundew).